A 629-amino-acid chain; its full sequence is uncharacterized protein (629 aa).

The ABC transporter 1 domain maps to 4–255; that stretch reads LKAENLYKTY…KRAEREAQAE (252 aa). ATP is bound at residue 36–43; it reads GPNGTGKS. Residues 284 to 304 form a disordered region; the sequence is KARIDRVETLKEQTGPQSSGS. Residues 285–294 are compositionally biased toward basic and acidic residues; sequence ARIDRVETLK. Residues 295–304 show a composition bias toward polar residues; that stretch reads EQTGPQSSGS. Positions 319 to 537 constitute an ABC transporter 2 domain; the sequence is IEAENVMIAY…EESKAKKAAP (219 aa). ATP is bound at residue 351–358; sequence GPNGIGKT. The segment at 530 to 555 is disordered; that stretch reads SKAKKAAPKPAAEEKTAEAEPKKKRK. Residues 540–550 show a composition bias toward basic and acidic residues; the sequence is AAEEKTAEAEP. Residues 560–629 are a coiled coil; it reads KDQLEWDGIE…LSLMIEELES (70 aa).

Belongs to the ABC transporter superfamily.

This is an uncharacterized protein from Bacillus subtilis (strain 168).